A 237-amino-acid chain; its full sequence is Large ribosomal subunit protein uL1 (237 aa).

The protein belongs to the universal ribosomal protein uL1 family. In terms of assembly, part of the 50S ribosomal subunit.

Functionally, binds directly to 23S rRNA. The L1 stalk is quite mobile in the ribosome, and is involved in E site tRNA release. Its function is as follows. Protein L1 is also a translational repressor protein, it controls the translation of the L11 operon by binding to its mRNA. This is Large ribosomal subunit protein uL1 from Nocardia farcinica (strain IFM 10152).